Reading from the N-terminus, the 463-residue chain is MTKPFSVVLASLLAITSTVSPLASAQQSQPLDRIAAIVDEDVVLQSELDRAVRNVKSQYAGRENQLPPDDVLQRQVLERLVLVKLQVSRADGNGIRVSDEELNRAIASIAQQNGTTVDGLRQKLAADGMGYADFRASVRDEIIVQRLRQSFAQSRISVSEGEVDTALAQQAATGSQYHLAHILIGLPEGATAEQIATGQKKVDGVKALIDKGELDFSAAAVRYSDSPNALEGGDLGWRSLDEIPNAFAQLIRDMQPGQVAGPLRGPSGFQLLKLVEMRDANAGGEKKMVTEYHARHILVRIGENQTEAQAKAKIDTIRARIVGGADFQATAKESSEDTNSRGQGGDLGWFPADAFGPDFGKQVESLTDGAVSEPFRTQAGWHIVQRVGSRQTDVSAENQRAQVRETIGRRKLEEEYNRYLQELRGEAYVSYRTGDRADDNATAAPAKSADPAAPSPPPAKPTR.

An N-terminal signal peptide occupies residues M1–A25. PpiC domains lie at G174 to E276 and V289 to G388. Disordered stretches follow at residues Q328–G348 and R432–R463. The span at N440–A452 shows a compositional bias: low complexity. The span at A453–R463 shows a compositional bias: pro residues.

It localises to the periplasm. The enzyme catalyses [protein]-peptidylproline (omega=180) = [protein]-peptidylproline (omega=0). Chaperone involved in the correct folding and assembly of outer membrane proteins. Recognizes specific patterns of aromatic residues and the orientation of their side chains, which are found more frequently in integral outer membrane proteins. May act in both early periplasmic and late outer membrane-associated steps of protein maturation. In Xanthomonas euvesicatoria pv. vesicatoria (strain 85-10) (Xanthomonas campestris pv. vesicatoria), this protein is Chaperone SurA.